The sequence spans 491 residues: Nuatigenin 3-beta-glucosyltransferase (491 aa).

The active-site Proton acceptor is histidine 20. Histidine 20 is an an anthocyanidin binding site. Aspartate 125 serves as the catalytic Charge relay. Residues alanine 352, glutamine 354, histidine 369, tryptophan 372, asparagine 373, serine 374, and glutamate 377 each coordinate UDP-alpha-D-glucose. Alanine 392 serves as a coordination point for an anthocyanidin. The UDP-alpha-D-glucose site is built by glutamate 393 and glutamine 394.

It belongs to the UDP-glycosyltransferase family. In terms of tissue distribution, expressed in roots, stems and leaves.

The enzyme catalyses nuatigenin + UDP-alpha-D-glucose = nuatigenin 3-beta-D-glucopyranoside + UDP + H(+). It catalyses the reaction diosgenin + UDP-alpha-D-glucose = diosgenin 3-O-beta-D-glucoside + UDP + H(+). It carries out the reaction tigogenin + UDP-alpha-D-glucose = tigogenin 3-O-beta-D-glucopyranoside + UDP + H(+). The catalysed reaction is solasodine + UDP-alpha-D-glucose = solasodine 3-beta-D-glucoside + UDP + H(+). The enzyme catalyses solanidine + UDP-alpha-D-glucose = solanidine 3-O-beta-D-glucopyranoside + UDP + H(+). It catalyses the reaction tomatidine + UDP-alpha-D-glucose = tomatidine 3-O-beta-D-glucopyranoside + UDP + H(+). Its function is as follows. Glucosyltransferase involved in steroid saponin biosynthesis. Catalyzes the 3-O-glucosylation of steroidal sapogenins, such as diosgenin, nuatigenin and tigogenin. Can glucosylate steroidal alkaloids, such as solanidine, solasodine and tomatidine. The chain is Nuatigenin 3-beta-glucosyltransferase from Solanum aculeatissimum (Dutch eggplant).